A 291-amino-acid chain; its full sequence is Acetyl-coenzyme A carboxylase carboxyl transferase subunit beta (291 aa).

In terms of domain architecture, CoA carboxyltransferase N-terminal spans Met34 to Glu291. Residues Cys38, Cys41, Cys57, and Cys60 each contribute to the Zn(2+) site. Residues Cys38–Cys60 form a C4-type zinc finger.

It belongs to the AccD/PCCB family. In terms of assembly, acetyl-CoA carboxylase is a heterohexamer composed of biotin carboxyl carrier protein (AccB), biotin carboxylase (AccC) and two subunits each of ACCase subunit alpha (AccA) and ACCase subunit beta (AccD). Requires Zn(2+) as cofactor.

It is found in the cytoplasm. It carries out the reaction N(6)-carboxybiotinyl-L-lysyl-[protein] + acetyl-CoA = N(6)-biotinyl-L-lysyl-[protein] + malonyl-CoA. The protein operates within lipid metabolism; malonyl-CoA biosynthesis; malonyl-CoA from acetyl-CoA: step 1/1. Component of the acetyl coenzyme A carboxylase (ACC) complex. Biotin carboxylase (BC) catalyzes the carboxylation of biotin on its carrier protein (BCCP) and then the CO(2) group is transferred by the transcarboxylase to acetyl-CoA to form malonyl-CoA. This chain is Acetyl-coenzyme A carboxylase carboxyl transferase subunit beta, found in Clostridium botulinum (strain Eklund 17B / Type B).